We begin with the raw amino-acid sequence, 354 residues long: Uroporphyrinogen decarboxylase (354 aa).

Substrate-binding positions include 27-31, D77, Y154, T209, and H327; that span reads RQAGR.

This sequence belongs to the uroporphyrinogen decarboxylase family. In terms of assembly, homodimer.

The protein localises to the cytoplasm. It catalyses the reaction uroporphyrinogen III + 4 H(+) = coproporphyrinogen III + 4 CO2. It functions in the pathway porphyrin-containing compound metabolism; protoporphyrin-IX biosynthesis; coproporphyrinogen-III from 5-aminolevulinate: step 4/4. Catalyzes the decarboxylation of four acetate groups of uroporphyrinogen-III to yield coproporphyrinogen-III. The sequence is that of Uroporphyrinogen decarboxylase from Actinobacillus pleuropneumoniae serotype 5b (strain L20).